We begin with the raw amino-acid sequence, 180 residues long: 3-hydroxyanthranilate 3,4-dioxygenase (180 aa).

An O2-binding site is contributed by Arg-46. His-50, Glu-56, and His-94 together coordinate Fe cation. Glu-56 contributes to the substrate binding site. Residues Arg-98 and Glu-109 each coordinate substrate. Residues Cys-124, Cys-127, Cys-161, and Cys-164 each coordinate Fe cation.

The protein belongs to the 3-HAO family. In terms of assembly, homodimer. It depends on Fe(2+) as a cofactor.

The enzyme catalyses 3-hydroxyanthranilate + O2 = (2Z,4Z)-2-amino-3-carboxymuconate 6-semialdehyde. The protein operates within cofactor biosynthesis; NAD(+) biosynthesis; quinolinate from L-kynurenine: step 3/3. In terms of biological role, catalyzes the oxidative ring opening of 3-hydroxyanthranilate to 2-amino-3-carboxymuconate semialdehyde, which spontaneously cyclizes to quinolinate. The protein is 3-hydroxyanthranilate 3,4-dioxygenase of Jannaschia sp. (strain CCS1).